Consider the following 393-residue polypeptide: MQFDTIELAIEALRNGESIIVVDDEDRENEGDLVAVTEWMDDNTINFMAREGRGLICAPIDKSIAERLKLQSMEQNNTDIYGTHFTVSIDHYKTTTGISAHERTQTARALIDENTNPEDFHRPGHLFPLIAKENGVLTRNGHTEAAVDLARLTGAQPAGVICEIMNDDGTMAKGEDLQSFKERHHLKMITIKSLVAFRKAVELNVNLKAKVKMPTDFGHFDMYGFTTNYSDEEIVAIVKGDLKSNPNVRMHSACLTGDIFHSQRCDCGAQLEASMKYIDEHGGMIIYLPQEGRGIGLINKLRAYELIEKGYDTVTANLALGFDEDLRDYHVAAEILKYFDISEINLLSNNPKKFEGLEDYGIEIVDRIELIVPETQYNHSYMETKKNKMGHLI.

The segment at 1 to 200 is DHBP synthase; that stretch reads MQFDTIELAI…IKSLVAFRKA (200 aa). D-ribulose 5-phosphate contacts are provided by residues 27-28, aspartate 32, 139-143, and glutamate 163; these read RE and RNGHT. Glutamate 28 serves as a coordination point for Mg(2+). Histidine 142 contacts Mg(2+). The tract at residues 201–393 is GTP cyclohydrolase II; it reads VELNVNLKAK…TKKNKMGHLI (193 aa). GTP is bound at residue 249-253; the sequence is RMHSA. Positions 254, 265, and 267 each coordinate Zn(2+). GTP contacts are provided by residues glutamine 270, 291 to 293, and threonine 313; that span reads EGR. The active-site Proton acceptor; for GTP cyclohydrolase activity is aspartate 325. The active-site Nucleophile; for GTP cyclohydrolase activity is the arginine 327. Residues serine 348 and lysine 353 each coordinate GTP.

It in the N-terminal section; belongs to the DHBP synthase family. This sequence in the C-terminal section; belongs to the GTP cyclohydrolase II family. Requires Mg(2+) as cofactor. It depends on Mn(2+) as a cofactor. Zn(2+) serves as cofactor.

The catalysed reaction is D-ribulose 5-phosphate = (2S)-2-hydroxy-3-oxobutyl phosphate + formate + H(+). It carries out the reaction GTP + 4 H2O = 2,5-diamino-6-hydroxy-4-(5-phosphoribosylamino)-pyrimidine + formate + 2 phosphate + 3 H(+). The protein operates within cofactor biosynthesis; riboflavin biosynthesis; 2-hydroxy-3-oxobutyl phosphate from D-ribulose 5-phosphate: step 1/1. Its pathway is cofactor biosynthesis; riboflavin biosynthesis; 5-amino-6-(D-ribitylamino)uracil from GTP: step 1/4. In terms of biological role, catalyzes the conversion of D-ribulose 5-phosphate to formate and 3,4-dihydroxy-2-butanone 4-phosphate. Functionally, catalyzes the conversion of GTP to 2,5-diamino-6-ribosylamino-4(3H)-pyrimidinone 5'-phosphate (DARP), formate and pyrophosphate. The chain is Riboflavin biosynthesis protein RibBA from Staphylococcus epidermidis (strain ATCC 35984 / DSM 28319 / BCRC 17069 / CCUG 31568 / BM 3577 / RP62A).